The primary structure comprises 2300 residues: Protein hobbit (2300 aa).

An N-terminal signal peptide occupies residues 1 to 21 (MMLQLLLFCLALFIFVYWVLP). The segment at 23–117 (GISWYLVKRF…LRRTQTLAGK (95 aa)) is transmembrane domain. Disordered stretches follow at residues 269–290 (TSTGQPSRRSTQGLAPSKRSYD) and 2111–2148 (VSDELDDNASTSSASTTNLQAKSSTSSSTKRSGKGKKG). The span at 270-282 (STGQPSRRSTQGL) shows a compositional bias: polar residues. Residues 1750 to 2300 (VVSETVGAFL…ASSGKRSGND (551 aa)) are required for endoplasmic reticulum-cell membrane contact sites location and binding to phosphatidylinositols. Residues 2119–2140 (ASTSSASTTNLQAKSSTSSSTK) show a composition bias toward low complexity.

It localises to the cell membrane. It is found in the endoplasmic reticulum membrane. The protein localises to the mitochondrion membrane. In terms of biological role, tube-forming lipid transport protein which binds to phosphatidylinositols and affects phosphatidylinositol-4,5-bisphosphate (PtdIns-4,5-P2) distribution. The chain is Protein hobbit from Drosophila melanogaster (Fruit fly).